Reading from the N-terminus, the 461-residue chain is Bifunctional protein GlmU (461 aa).

A pyrophosphorylase region spans residues 1 to 229; the sequence is MEKYVVVLAA…FSESLGVNDR (229 aa). UDP-N-acetyl-alpha-D-glucosamine is bound by residues 8 to 11, lysine 22, glutamine 72, and 77 to 78; these read LAAG and GT. Aspartate 102 lines the Mg(2+) pocket. Residues glycine 139, glutamate 154, asparagine 169, and asparagine 227 each contribute to the UDP-N-acetyl-alpha-D-glucosamine site. A Mg(2+)-binding site is contributed by asparagine 227. The tract at residues 230 to 250 is linker; it reads IALAEATRIMQRRINEGHMRD. Positions 251–461 are N-acetyltransferase; it reads GVTFIDPATA…LPLSEDEEWK (211 aa). Residues arginine 332 and lysine 350 each contribute to the UDP-N-acetyl-alpha-D-glucosamine site. Residue histidine 362 is the Proton acceptor of the active site. The UDP-N-acetyl-alpha-D-glucosamine site is built by tyrosine 365 and asparagine 376. Acetyl-CoA is bound by residues alanine 422 and arginine 439.

It in the N-terminal section; belongs to the N-acetylglucosamine-1-phosphate uridyltransferase family. In the C-terminal section; belongs to the transferase hexapeptide repeat family. As to quaternary structure, homotrimer. It depends on Mg(2+) as a cofactor.

The protein localises to the cytoplasm. The catalysed reaction is alpha-D-glucosamine 1-phosphate + acetyl-CoA = N-acetyl-alpha-D-glucosamine 1-phosphate + CoA + H(+). The enzyme catalyses N-acetyl-alpha-D-glucosamine 1-phosphate + UTP + H(+) = UDP-N-acetyl-alpha-D-glucosamine + diphosphate. The protein operates within nucleotide-sugar biosynthesis; UDP-N-acetyl-alpha-D-glucosamine biosynthesis; N-acetyl-alpha-D-glucosamine 1-phosphate from alpha-D-glucosamine 6-phosphate (route II): step 2/2. It functions in the pathway nucleotide-sugar biosynthesis; UDP-N-acetyl-alpha-D-glucosamine biosynthesis; UDP-N-acetyl-alpha-D-glucosamine from N-acetyl-alpha-D-glucosamine 1-phosphate: step 1/1. Its pathway is bacterial outer membrane biogenesis; LPS lipid A biosynthesis. Functionally, catalyzes the last two sequential reactions in the de novo biosynthetic pathway for UDP-N-acetylglucosamine (UDP-GlcNAc). The C-terminal domain catalyzes the transfer of acetyl group from acetyl coenzyme A to glucosamine-1-phosphate (GlcN-1-P) to produce N-acetylglucosamine-1-phosphate (GlcNAc-1-P), which is converted into UDP-GlcNAc by the transfer of uridine 5-monophosphate (from uridine 5-triphosphate), a reaction catalyzed by the N-terminal domain. This chain is Bifunctional protein GlmU, found in Lactobacillus delbrueckii subsp. bulgaricus (strain ATCC BAA-365 / Lb-18).